The following is a 1409-amino-acid chain: DNA-directed RNA polymerase subunit beta' (1409 aa).

4 residues coordinate Zn(2+): C70, C72, C85, and C88. Positions 461, 463, and 465 each coordinate Mg(2+). Zn(2+) contacts are provided by C833, C907, C914, and C917. The disordered stretch occupies residues 1389 to 1409 (EPVAQAAESEDVPDVSQQEAA).

This sequence belongs to the RNA polymerase beta' chain family. In terms of assembly, the RNAP catalytic core consists of 2 alpha, 1 beta, 1 beta' and 1 omega subunit. When a sigma factor is associated with the core the holoenzyme is formed, which can initiate transcription. It depends on Mg(2+) as a cofactor. Requires Zn(2+) as cofactor.

The catalysed reaction is RNA(n) + a ribonucleoside 5'-triphosphate = RNA(n+1) + diphosphate. Functionally, DNA-dependent RNA polymerase catalyzes the transcription of DNA into RNA using the four ribonucleoside triphosphates as substrates. The protein is DNA-directed RNA polymerase subunit beta' of Pelobacter propionicus (strain DSM 2379 / NBRC 103807 / OttBd1).